A 363-amino-acid polypeptide reads, in one-letter code: MQLLQSSVIAATVGAALVAAAPVELEARDSCTFTSAADAKSGKTSCSTITLSNIEVPAGETLDLTGLNDGTTVIFSGETTFGYKEWEGPLISVSGTNIKVQQASGAKIDGDGSRWWDGEGGNGGKTKPKFFYAHKLDSSSITGLQIYNTPVQGFSIQSDNLNITDVTIDNSAGTAEGHNTDAFDIGSSTYINIDGATVYNQDDCLAINSGSHITFTNGYCDGGHGLSIGSVGGRSDNTVEDVTISNSKVVNSQNGVRIKTVYGATGTVSNVKFEDITLSGITKYGLVVEQDYENGSPTGTPTNGITVSGITFEKVTGTVESDATDIYILCGSGSCTDWTWSGVSITGGKTSSKCENVPTGASC.

A signal peptide spans 1–20; that stretch reads MQLLQSSVIAATVGAALVAA. The propeptide occupies 21–28; sequence APVELEAR. The cysteines at positions 31 and 46 are disulfide-linked. PbH1 repeat units follow at residues 158–187, 188–209, 210–230, 239–260, 268–290, and 302–347; these read SDNL…DIGS, STYI…AINS, GSHI…SIGS, VEDV…RIKT, VSNV…VVEQ, and TNGI…SITG. Residue Asn-162 is glycosylated (N-linked (GlcNAc...) asparagine). Asp-202 (proton donor) is an active-site residue. The cysteines at positions 204 and 220 are disulfide-linked. His-224 is an active-site residue. 2 disulfides stabilise this stretch: Cys-330-Cys-335 and Cys-354-Cys-363.

Belongs to the glycosyl hydrolase 28 family.

The protein localises to the secreted. The enzyme catalyses (1,4-alpha-D-galacturonosyl)n+m + H2O = (1,4-alpha-D-galacturonosyl)n + (1,4-alpha-D-galacturonosyl)m.. Its function is as follows. Involved in maceration and soft-rotting of plant tissue. Hydrolyzes the 1,4-alpha glycosidic bonds of de-esterified pectate in the smooth region of the plant cell wall. In Aspergillus parasiticus, this protein is Probable endopolygalacturonase A (pgaA).